A 129-amino-acid chain; its full sequence is Phosphoribosyl-AMP cyclohydrolase (129 aa).

Mg(2+) is bound at residue D76. C77 is a binding site for Zn(2+). Positions 78 and 80 each coordinate Mg(2+). Zn(2+)-binding residues include C97 and C104.

It belongs to the PRA-CH family. In terms of assembly, homodimer. Requires Mg(2+) as cofactor. The cofactor is Zn(2+).

Its subcellular location is the cytoplasm. The catalysed reaction is 1-(5-phospho-beta-D-ribosyl)-5'-AMP + H2O = 1-(5-phospho-beta-D-ribosyl)-5-[(5-phospho-beta-D-ribosylamino)methylideneamino]imidazole-4-carboxamide. The protein operates within amino-acid biosynthesis; L-histidine biosynthesis; L-histidine from 5-phospho-alpha-D-ribose 1-diphosphate: step 3/9. In terms of biological role, catalyzes the hydrolysis of the adenine ring of phosphoribosyl-AMP. The protein is Phosphoribosyl-AMP cyclohydrolase of Verminephrobacter eiseniae (strain EF01-2).